We begin with the raw amino-acid sequence, 502 residues long: Lysine--tRNA ligase (502 aa).

Residues E398 and E405 each contribute to the Mg(2+) site.

Belongs to the class-II aminoacyl-tRNA synthetase family. Homodimer. The cofactor is Mg(2+).

Its subcellular location is the cytoplasm. It catalyses the reaction tRNA(Lys) + L-lysine + ATP = L-lysyl-tRNA(Lys) + AMP + diphosphate. This Thermosipho melanesiensis (strain DSM 12029 / CIP 104789 / BI429) protein is Lysine--tRNA ligase.